Reading from the N-terminus, the 344-residue chain is Cell division protein ZipA (344 aa).

At 1-6 (MEDLQL) the chain is on the periplasmic side. The chain crosses the membrane as a helical span at residues 7–27 (VLFVLGAIAIVAVLVHGFWSI). Over 28 to 344 (RRQQPKSLKD…DYLHRIRANA (317 aa)) the chain is Cytoplasmic. Disordered stretches follow at residues 75–94 (VRKA…PYLK) and 108–139 (QFKQ…ASRQ).

The protein belongs to the ZipA family. Interacts with FtsZ via their C-terminal domains.

It localises to the cell inner membrane. In terms of biological role, essential cell division protein that stabilizes the FtsZ protofilaments by cross-linking them and that serves as a cytoplasmic membrane anchor for the Z ring. Also required for the recruitment to the septal ring of downstream cell division proteins. The chain is Cell division protein ZipA from Shewanella oneidensis (strain ATCC 700550 / JCM 31522 / CIP 106686 / LMG 19005 / NCIMB 14063 / MR-1).